Reading from the N-terminus, the 184-residue chain is ATP synthase subunit b, chloroplastic (184 aa).

A helical transmembrane segment spans residues 27 to 49 (LATNPINLSVVLGVLIFFGKGVL).

It belongs to the ATPase B chain family. In terms of assembly, F-type ATPases have 2 components, F(1) - the catalytic core - and F(0) - the membrane proton channel. F(1) has five subunits: alpha(3), beta(3), gamma(1), delta(1), epsilon(1). F(0) has four main subunits: a(1), b(1), b'(1) and c(10-14). The alpha and beta chains form an alternating ring which encloses part of the gamma chain. F(1) is attached to F(0) by a central stalk formed by the gamma and epsilon chains, while a peripheral stalk is formed by the delta, b and b' chains.

The protein resides in the plastid. The protein localises to the chloroplast thylakoid membrane. Functionally, f(1)F(0) ATP synthase produces ATP from ADP in the presence of a proton or sodium gradient. F-type ATPases consist of two structural domains, F(1) containing the extramembraneous catalytic core and F(0) containing the membrane proton channel, linked together by a central stalk and a peripheral stalk. During catalysis, ATP synthesis in the catalytic domain of F(1) is coupled via a rotary mechanism of the central stalk subunits to proton translocation. In terms of biological role, component of the F(0) channel, it forms part of the peripheral stalk, linking F(1) to F(0). This is ATP synthase subunit b, chloroplastic from Oenothera elata subsp. hookeri (Hooker's evening primrose).